The primary structure comprises 256 residues: Imidazole glycerol phosphate synthase subunit HisF (256 aa).

Active-site residues include Asp-12 and Asp-131.

This sequence belongs to the HisA/HisF family. In terms of assembly, heterodimer of HisH and HisF.

It localises to the cytoplasm. It carries out the reaction 5-[(5-phospho-1-deoxy-D-ribulos-1-ylimino)methylamino]-1-(5-phospho-beta-D-ribosyl)imidazole-4-carboxamide + L-glutamine = D-erythro-1-(imidazol-4-yl)glycerol 3-phosphate + 5-amino-1-(5-phospho-beta-D-ribosyl)imidazole-4-carboxamide + L-glutamate + H(+). Its pathway is amino-acid biosynthesis; L-histidine biosynthesis; L-histidine from 5-phospho-alpha-D-ribose 1-diphosphate: step 5/9. Its function is as follows. IGPS catalyzes the conversion of PRFAR and glutamine to IGP, AICAR and glutamate. The HisF subunit catalyzes the cyclization activity that produces IGP and AICAR from PRFAR using the ammonia provided by the HisH subunit. The polypeptide is Imidazole glycerol phosphate synthase subunit HisF (Pseudomonas entomophila (strain L48)).